Here is a 340-residue protein sequence, read N- to C-terminus: Very-long-chain 3-oxoacyl-CoA reductase (340 aa).

Residues 23-43 form a helical membrane-spanning segment; sequence LQYTFAALGALYVLRGALSFV. Residues valine 68, arginine 109, aspartate 123, aspartate 131, asparagine 150, lysine 185, tyrosine 217, lysine 221, valine 250, and threonine 252 each contribute to the NADP(+) site. The Proton donor role is filled by tyrosine 217. Lysine 221 (lowers pKa of active site Tyr) is an active-site residue.

It belongs to the short-chain dehydrogenases/reductases (SDR) family.

It localises to the endoplasmic reticulum membrane. The enzyme catalyses a very-long-chain (3R)-3-hydroxyacyl-CoA + NADP(+) = a very-long-chain 3-oxoacyl-CoA + NADPH + H(+). Its pathway is lipid metabolism; fatty acid biosynthesis. Component of the microsomal membrane bound fatty acid elongation system, which produces the 26-carbon very long-chain fatty acids (VLCFA) from palmitate. Catalyzes the reduction of the 3-ketoacyl-CoA intermediate that is formed in each cycle of fatty acid elongation. VLCFAs serve as precursors for ceramide and sphingolipids. This chain is Very-long-chain 3-oxoacyl-CoA reductase, found in Podospora anserina (strain S / ATCC MYA-4624 / DSM 980 / FGSC 10383) (Pleurage anserina).